Here is a 424-residue protein sequence, read N- to C-terminus: Putative ankyrin repeat protein R858 (424 aa).

ANK repeat units follow at residues 115-144 (HLMC…FTKR), 147-177 (TDHT…SDYF), 184-215 (INDS…SINY), and 219-252 (TGST…DIHE).

The protein is Putative ankyrin repeat protein R858 of Acanthamoeba polyphaga (Amoeba).